The primary structure comprises 345 residues: MNINDFDFDLPEELIAQTPLEKRSESRLLILDPKTEELEDRHFYNIIDELEAGDALVLNNTRVLPARLHGERAETGGHIELLLLKDMGQNRWETLAKPARKMKVGEEVVFGDGRLKAVVVEVLDHGGRIVEFKYDGIFLEILESLGEMPLPPYIHEQLQDQERYQTVFAKENGSAAAPTAGLHYTPELLEKIADKGVKIVELTLHVGLGTFRPVSVDNVDEHQMHSEFYRLTEEAAAQLRAVKASGHKIVASGTTSIRTLETIGSKFDGDIQADSGWTDIFIKPGYEWKVVDAFNTNFHLPKSTLVMLVAAFAGRDFVLDAYQHAIDEKYRFFSFGDAMFVRPKK.

Belongs to the QueA family. In terms of assembly, monomer.

It is found in the cytoplasm. The catalysed reaction is 7-aminomethyl-7-carbaguanosine(34) in tRNA + S-adenosyl-L-methionine = epoxyqueuosine(34) in tRNA + adenine + L-methionine + 2 H(+). The protein operates within tRNA modification; tRNA-queuosine biosynthesis. In terms of biological role, transfers and isomerizes the ribose moiety from AdoMet to the 7-aminomethyl group of 7-deazaguanine (preQ1-tRNA) to give epoxyqueuosine (oQ-tRNA). The protein is S-adenosylmethionine:tRNA ribosyltransferase-isomerase of Lactococcus lactis subsp. lactis (strain IL1403) (Streptococcus lactis).